A 262-amino-acid chain; its full sequence is Indole-3-glycerol phosphate synthase (262 aa).

Belongs to the TrpC family.

It catalyses the reaction 1-(2-carboxyphenylamino)-1-deoxy-D-ribulose 5-phosphate + H(+) = (1S,2R)-1-C-(indol-3-yl)glycerol 3-phosphate + CO2 + H2O. Its pathway is amino-acid biosynthesis; L-tryptophan biosynthesis; L-tryptophan from chorismate: step 4/5. This chain is Indole-3-glycerol phosphate synthase, found in Bordetella bronchiseptica (strain ATCC BAA-588 / NCTC 13252 / RB50) (Alcaligenes bronchisepticus).